The chain runs to 181 residues: ATP synthase subunit delta (181 aa).

This sequence belongs to the ATPase delta chain family. In terms of assembly, F-type ATPases have 2 components, F(1) - the catalytic core - and F(0) - the membrane proton channel. F(1) has five subunits: alpha(3), beta(3), gamma(1), delta(1), epsilon(1). F(0) has three main subunits: a(1), b(2) and c(10-14). The alpha and beta chains form an alternating ring which encloses part of the gamma chain. F(1) is attached to F(0) by a central stalk formed by the gamma and epsilon chains, while a peripheral stalk is formed by the delta and b chains.

The protein resides in the cell inner membrane. Its function is as follows. F(1)F(0) ATP synthase produces ATP from ADP in the presence of a proton or sodium gradient. F-type ATPases consist of two structural domains, F(1) containing the extramembraneous catalytic core and F(0) containing the membrane proton channel, linked together by a central stalk and a peripheral stalk. During catalysis, ATP synthesis in the catalytic domain of F(1) is coupled via a rotary mechanism of the central stalk subunits to proton translocation. In terms of biological role, this protein is part of the stalk that links CF(0) to CF(1). It either transmits conformational changes from CF(0) to CF(1) or is implicated in proton conduction. This is ATP synthase subunit delta from Chlorobium limicola (strain DSM 245 / NBRC 103803 / 6330).